We begin with the raw amino-acid sequence, 217 residues long: Adenylate kinase (217 aa).

10 to 15 (GAGKGT) is a binding site for ATP. An NMP region spans residues 30–59 (STGDMFRAAMKNETELGLKAKSFIDAGDLV). AMP contacts are provided by residues T31, R36, 57-59 (DLV), 85-88 (GFPR), and Q92. An LID region spans residues 126–163 (GRRVSPTTGKTYHIVYNPPKVEGKCDIDGSDLIQRDDD). ATP contacts are provided by residues R127 and 136–137 (TY). Positions 160 and 171 each coordinate AMP. ATP is bound at residue Q199.

The protein belongs to the adenylate kinase family. As to quaternary structure, monomer.

It localises to the cytoplasm. It catalyses the reaction AMP + ATP = 2 ADP. The protein operates within purine metabolism; AMP biosynthesis via salvage pathway; AMP from ADP: step 1/1. Its function is as follows. Catalyzes the reversible transfer of the terminal phosphate group between ATP and AMP. Plays an important role in cellular energy homeostasis and in adenine nucleotide metabolism. The chain is Adenylate kinase from Shouchella clausii (strain KSM-K16) (Alkalihalobacillus clausii).